A 330-amino-acid chain; its full sequence is GTPase Obg (330 aa).

One can recognise an Obg domain in the interval 1–159 (MHFIDEVKIY…MWIHLSLKLL (159 aa)). Residues 160-327 (SDVGLVGFPN…IVKLALETIK (168 aa)) form the OBG-type G domain. GTP contacts are provided by residues 166 to 173 (GFPNAGKS), 191 to 195 (FTTLV), 212 to 215 (DIPG), 279 to 282 (NKCD), and 308 to 310 (STY). Mg(2+) is bound by residues S173 and T193.

Belongs to the TRAFAC class OBG-HflX-like GTPase superfamily. OBG GTPase family. Monomer. The cofactor is Mg(2+).

It is found in the cytoplasm. An essential GTPase which binds GTP, GDP and possibly (p)ppGpp with moderate affinity, with high nucleotide exchange rates and a fairly low GTP hydrolysis rate. Plays a role in control of the cell cycle, stress response, ribosome biogenesis and in those bacteria that undergo differentiation, in morphogenesis control. This is GTPase Obg from Rickettsia massiliae (strain Mtu5).